Here is a 208-residue protein sequence, read N- to C-terminus: CKLF-like MARVEL transmembrane domain-containing protein 4 (208 aa).

Acidic residues predominate over residues 1–11 (MRGGEELDGFE). The interval 1–38 (MRGGEELDGFEGEASSTSMISGASSPYQPTTEPVSQRR) is disordered. Over residues 15 to 25 (SSTSMISGASS) the composition is skewed to low complexity. Positions 49–176 (YLRGALGRLK…STFLAMQKWR (128 aa)) constitute an MARVEL domain. 4 helical membrane passes run 59–79 (VAQV…MECS), 85–105 (YFFE…LILF), 123–143 (LVNT…LAAL), and 151–171 (IAAV…TFLA). Position 194 is a phosphoserine (Ser194).

It belongs to the chemokine-like factor family. In terms of assembly, interacts with PD1L1 and CMTM6.

It localises to the membrane. Functionally, acts as a backup for CMTM6 to regulate plasma membrane expression of PD-L1/CD274, an immune inhibitory ligand critical for immune tolerance to self and antitumor immunity. May protect PD-L1/CD274 from being polyubiquitinated and targeted for degradation. The polypeptide is CKLF-like MARVEL transmembrane domain-containing protein 4 (Mus musculus (Mouse)).